A 217-amino-acid chain; its full sequence is Ras-related protein RABA1g (217 aa).

20 to 27 (GDSGVGKS) is a binding site for GTP. An Effector region motif is present at residues 42 to 50 (SKSTIGVEF). GTP-binding positions include 68–72 (DTAGQ), 126–129 (NKAD), and 156–157 (SA). S-geranylgeranyl cysteine attachment occurs at residues Cys214 and Cys215.

Belongs to the small GTPase superfamily. Rab family.

The protein resides in the cell membrane. Its function is as follows. Intracellular vesicle trafficking and protein transport. The protein is Ras-related protein RABA1g (RABA1G) of Arabidopsis thaliana (Mouse-ear cress).